We begin with the raw amino-acid sequence, 20 residues long: Cytosol aminopeptidase (20 aa).

Position 6 is a phosphoserine (Ser6).

This sequence belongs to the peptidase M17 family. As to quaternary structure, homohexamer. Zn(2+) serves as cofactor. The cofactor is Mn(2+).

Its subcellular location is the cytoplasm. The enzyme catalyses Release of an N-terminal amino acid, Xaa-|-Yaa-, in which Xaa is preferably Leu, but may be other amino acids including Pro although not Arg or Lys, and Yaa may be Pro. Amino acid amides and methyl esters are also readily hydrolyzed, but rates on arylamides are exceedingly low.. It catalyses the reaction an S-substituted L-cysteinylglycine + H2O = an S-substituted L-cysteine + glycine. It carries out the reaction L-cysteinylglycine + H2O = L-cysteine + glycine. The catalysed reaction is S-benzyl-L-cysteinylglycine + H2O = S-benzyl-L-cysteine + glycine. The enzyme catalyses Release of N-terminal proline from a peptide.. Its function is as follows. Cytosolic metallopeptidase that catalyzes the removal of unsubstituted N-terminal hydrophobic amino acids from various peptides. The presence of Zn(2+) ions is essential for the peptidase activity, and the association with other cofactors can modulate the substrate spectificity of the enzyme. For instance, in the presence of Mn(2+), it displays a specific Cys-Gly hydrolyzing activity of Cys-Gly-S-conjugates. Involved in the metabolism of glutathione and in the degradation of glutathione S-conjugates, which may play a role in the control of the cell redox status. The sequence is that of Cytosol aminopeptidase from Mesocricetus auratus (Golden hamster).